The sequence spans 199 residues: Female-specific protein transformer (199 aa).

2 disordered regions span residues M1–R121 and Y178–N199. A compositionally biased stretch (basic and acidic residues) spans R20–R37. Composition is skewed to basic residues over residues R56 to T69, C77 to S92, and S102 to T119.

It localises to the nucleus speckle. In terms of biological role, member of the regulatory pathway controlling female somatic sexual differentiation, regulated by Sxl. Activates dsx female-specific splicing by promoting the formation of a splicing enhancer complex which consists of tra, tra2 and sr proteins. In Drosophila virilis (Fruit fly), this protein is Female-specific protein transformer (tra).